Reading from the N-terminus, the 63-residue chain is Large ribosomal subunit protein bL35 (63 aa).

It belongs to the bacterial ribosomal protein bL35 family.

The protein is Large ribosomal subunit protein bL35 of Campylobacter fetus subsp. fetus (strain 82-40).